The primary structure comprises 210 residues: Homeobox protein Rhox5 (210 aa).

Residues 1-119 (MEAEGSSRKV…GNPGGRQMPL (119 aa)) are disordered. The segment covering 17-30 (GVKEDSEEQHDVKA) has biased composition (basic and acidic residues). A compositionally biased stretch (gly residues) spans 47–79 (GQPGVGAVGTEGEGEELNGGKGHFGPGAPGPMG). Residues 117–175 (MPLQGSRFAQHRLRELESILQRTNSFDVPREDLDRLMDACVSRVQNWFKIRRAAARRTR) constitute a DNA-binding region (homeobox; atypical).

It is found in the nucleus. Transcription factor required for differentiation of embryonic stem cells (ESCs) into primordial germ cells. This chain is Homeobox protein Rhox5 (Rhox5), found in Mus musculus (Mouse).